The primary structure comprises 159 residues: RNA pyrophosphohydrolase (159 aa).

Residues 6 to 149 (GYRPNVGIVI…KRNVYRRMMK (144 aa)) form the Nudix hydrolase domain. The Nudix box motif lies at 38–59 (GGINSGETAEQAMFRELFEEVG).

The protein belongs to the Nudix hydrolase family. RppH subfamily. It depends on a divalent metal cation as a cofactor.

Functionally, accelerates the degradation of transcripts by removing pyrophosphate from the 5'-end of triphosphorylated RNA, leading to a more labile monophosphorylated state that can stimulate subsequent ribonuclease cleavage. The protein is RNA pyrophosphohydrolase of Baumannia cicadellinicola subsp. Homalodisca coagulata.